The following is a 326-amino-acid chain: Acetyl-coenzyme A carboxylase carboxyl transferase subunit beta (326 aa).

The CoA carboxyltransferase N-terminal domain maps to 25 to 308 (LWVKCPASGE…RRDDRSTLQL (284 aa)). Residues 298–326 (RRRDDRSTLQLTPPKTHAPKPPEPKVKPD) form a disordered region. Basic and acidic residues predominate over residues 317–326 (KPPEPKVKPD).

Belongs to the AccD/PCCB family. As to quaternary structure, acetyl-CoA carboxylase is a heterohexamer composed of biotin carboxyl carrier protein (AccB), biotin carboxylase (AccC) and two subunits each of ACCase subunit alpha (AccA) and ACCase subunit beta (AccD).

It is found in the cytoplasm. The catalysed reaction is N(6)-carboxybiotinyl-L-lysyl-[protein] + acetyl-CoA = N(6)-biotinyl-L-lysyl-[protein] + malonyl-CoA. The protein operates within lipid metabolism; malonyl-CoA biosynthesis; malonyl-CoA from acetyl-CoA: step 1/1. Functionally, component of the acetyl coenzyme A carboxylase (ACC) complex. Biotin carboxylase (BC) catalyzes the carboxylation of biotin on its carrier protein (BCCP) and then the CO(2) group is transferred by the transcarboxylase to acetyl-CoA to form malonyl-CoA. This Hyphomonas neptunium (strain ATCC 15444) protein is Acetyl-coenzyme A carboxylase carboxyl transferase subunit beta.